We begin with the raw amino-acid sequence, 428 residues long: Adenylosuccinate synthetase (428 aa).

GTP is bound by residues 12-18 (GDEGKGK) and 40-42 (GHT). The active-site Proton acceptor is the D13. Mg(2+) contacts are provided by D13 and G40. Residues 13–16 (DEGK), 38–41 (NAGH), T133, R147, N224, T239, and R303 each bind IMP. Residue H41 is the Proton donor of the active site. 299 to 305 (TTTGRRR) is a binding site for substrate. GTP is bound by residues R305, 331–333 (KLD), and 413–415 (GVG).

Belongs to the adenylosuccinate synthetase family. Homodimer. Requires Mg(2+) as cofactor.

Its subcellular location is the cytoplasm. The enzyme catalyses IMP + L-aspartate + GTP = N(6)-(1,2-dicarboxyethyl)-AMP + GDP + phosphate + 2 H(+). It participates in purine metabolism; AMP biosynthesis via de novo pathway; AMP from IMP: step 1/2. In terms of biological role, plays an important role in the de novo pathway and in the salvage pathway of purine nucleotide biosynthesis. Catalyzes the first committed step in the biosynthesis of AMP from IMP. In Coprinopsis cinerea (strain Okayama-7 / 130 / ATCC MYA-4618 / FGSC 9003) (Inky cap fungus), this protein is Adenylosuccinate synthetase.